A 480-amino-acid polypeptide reads, in one-letter code: Cytochrome b-c1 complex subunit 1, mitochondrial (480 aa).

A mitochondrion-targeting transit peptide spans 1 to 34 (MAASAVCRAACSGTQALLRTCRSPALLRLPALRG). K111 and K138 each carry N6-acetyllysine. K163 bears the N6-acetyllysine; alternate mark. At K163 the chain carries N6-succinyllysine; alternate. S212 is modified (phosphoserine). Phosphothreonine is present on T214.

Belongs to the peptidase M16 family. UQCRC1/QCR1 subfamily. Component of the ubiquinol-cytochrome c oxidoreductase (cytochrome b-c1 complex, complex III, CIII), a multisubunit enzyme composed of 11 subunits. The complex is composed of 3 respiratory subunits cytochrome b, cytochrome c1 and Rieske protein UQCRFS1, 2 core protein subunits UQCRC1/QCR1 and UQCRC2/QCR2, and 6 low-molecular weight protein subunits UQCRH/QCR6, UQCRB/QCR7, UQCRQ/QCR8, UQCR10/QCR9, UQCR11/QCR10 and subunit 9, the cleavage product of Rieske protein UQCRFS1. The complex exists as an obligatory dimer and forms supercomplexes (SCs) in the inner mitochondrial membrane with NADH-ubiquinone oxidoreductase (complex I, CI) and cytochrome c oxidase (complex IV, CIV), resulting in different assemblies (supercomplex SCI(1)III(2)IV(1) and megacomplex MCI(2)III(2)IV(2)). Interacts with UQCC6. Interacts with STMP1.

The protein localises to the mitochondrion inner membrane. In terms of biological role, component of the ubiquinol-cytochrome c oxidoreductase, a multisubunit transmembrane complex that is part of the mitochondrial electron transport chain which drives oxidative phosphorylation. The respiratory chain contains 3 multisubunit complexes succinate dehydrogenase (complex II, CII), ubiquinol-cytochrome c oxidoreductase (cytochrome b-c1 complex, complex III, CIII) and cytochrome c oxidase (complex IV, CIV), that cooperate to transfer electrons derived from NADH and succinate to molecular oxygen, creating an electrochemical gradient over the inner membrane that drives transmembrane transport and the ATP synthase. The cytochrome b-c1 complex catalyzes electron transfer from ubiquinol to cytochrome c, linking this redox reaction to translocation of protons across the mitochondrial inner membrane, with protons being carried across the membrane as hydrogens on the quinol. In the process called Q cycle, 2 protons are consumed from the matrix, 4 protons are released into the intermembrane space and 2 electrons are passed to cytochrome c. The 2 core subunits UQCRC1/QCR1 and UQCRC2/QCR2 are homologous to the 2 mitochondrial-processing peptidase (MPP) subunits beta-MPP and alpha-MPP respectively, and they seem to have preserved their MPP processing properties. May be involved in the in situ processing of UQCRFS1 into the mature Rieske protein and its mitochondrial targeting sequence (MTS)/subunit 9 when incorporated into complex III. Seems to play an important role in the maintenance of proper mitochondrial function in nigral dopaminergic neurons. This is Cytochrome b-c1 complex subunit 1, mitochondrial (Uqcrc1) from Rattus norvegicus (Rat).